The chain runs to 359 residues: MMP endo-(1,4)-3-O-methyl-alpha-D-mannosidase (359 aa).

In terms of assembly, monomer in solution.

The catalysed reaction is Endohydrolysis of 3-O-methyl-alpha-D-mannosyl-(1-&gt;4)-3-O-methyl-D-mannose linkages within (1,4)-3-O-methyl-alpha-D-mannnan substrates.. Hydrolase involved in the biosynthesis of 3-O-methylmannose polysaccharides (MMP), which are intracellular polymethylated polysaccharides implicated in the modulation of fatty acid metabolism in non-tuberculous mycobacteria. Highly specific hydrolase that catalyzes the internal cleavage of MMP. Is able to hydrolyze purified MMP into distinct lower order oligomannosides but does not cleave acylated or deacylated forms of 6-O-methylglucose lipopolysaccharide (MGLP), beta-mannans, synthetic 4alpha-oligomannosides or its own reaction products. Products were identified as four distinct oligomannosides differing in the number of mannose units (4 to 8) and methylation pattern (free or methylated C1-OH). Might serve as a recycling enzyme that hydrolyzes mature MMP into defined-size smaller oligomannosides that are, in turn, substrates for ManT and MeT1 activities for further processing into new daughter MMP chains. The polypeptide is MMP endo-(1,4)-3-O-methyl-alpha-D-mannosidase (Mycolicibacterium hassiacum (strain DSM 44199 / CIP 105218 / JCM 12690 / 3849) (Mycobacterium hassiacum)).